The chain runs to 560 residues: Solute carrier family 22 member 6 (560 aa).

Residues 1-15 (MAFSDLLEQVGSTGR) are Cytoplasmic-facing. The helical transmembrane segment at 16-36 (FQVLHVTLLSMPILMMASHNL) threads the bilayer. At 37-143 (LQNFVAAVPP…LVCDYRALKQ (107 aa)) the chain is on the extracellular side. The chain crosses the membrane as a helical span at residues 144 to 164 (MSQTTYMGGVLVGAIVFGGLS). At 165-170 (DRFGRR) the chain is on the cytoplasmic side. The chain crosses the membrane as a helical span at residues 171–191 (VLLLISNLMMAIGGTCVAFST). Over 192-201 (SFTMFCVFRV) the chain is Extracellular. Residues 202-222 (CCGMALSGLVLNSFSLIVEWI) form a helical membrane-spanning segment. The Cytoplasmic segment spans residues 223 to 228 (PTRVRT). The helical transmembrane segment at 229 to 249 (VVGTGTGYCYTTGQLILAAVA) threads the bilayer. Residues 250–256 (YCIRDWR) are Extracellular-facing. The chain crosses the membrane as a helical span at residues 257 to 277 (WLTLAVSLPFYVSFLYSWWFL). Topologically, residues 278–345 (ESARWLVLTK…DLLRTSTMRT (68 aa)) are cytoplasmic. Residues 346–366 (ITICLSAVWFSTSFAYYGLSM) form a helical membrane-spanning segment. Topologically, residues 367-374 (DLQKFGVS) are extracellular. Residues 375–395 (IYLIQIIFGAVDIPAKIIVTI) form a helical membrane-spanning segment. At 396–406 (CMSMLGRRPSQ) the chain is on the cytoplasmic side. The helical transmembrane segment at 407–427 (CGALVLAGIMILINLLVPSDL) threads the bilayer. Topologically, residues 428–433 (QMLRTS) are extracellular. The helical transmembrane segment at 434 to 454 (LAVIGKGCLAASFNCCYLYAG) threads the bilayer. At 455-465 (ELYPTVIRQSG) the chain is on the cytoplasmic side. A helical membrane pass occupies residues 466 to 486 (MGWVSMMARFGAMVAPMVLLL). At 487–491 (GDDYP) the chain is on the extracellular side. Residues 492–512 (WIPGFIYGGAPIVSGIFAFFL) form a helical membrane-spanning segment. Over 513–560 (PETLSQPLPDTIQDIDDRGLARTNSKRLPEKLDLAMKDPSCVLLKESV) the chain is Cytoplasmic.

This sequence belongs to the major facilitator (TC 2.A.1) superfamily. Organic cation transporter (TC 2.A.1.19) family. Glycosylated. Glycosylation is necessary for proper targeting of the transporter to the plasma membrane.

The protein localises to the cell membrane. Its subcellular location is the basolateral cell membrane. It localises to the basal cell membrane. Its function is as follows. Involved in the renal elimination of endogenous and exogenous organic anions. Functions as organic anion exchanger when the uptake of one molecule of organic anion is coupled with an efflux of one molecule of endogenous dicarboxylic acid (glutarate, ketoglutarate, etc). Mediates the sodium-independent uptake of p-aminohippurate (PAH), 2,3-dimercapto-1-propanesulfonic acid (DMPS), cidofovir, adefovir, 9-(2-phosphonylmethoxyethyl) guanine (PMEG), 9-(2-phosphonylmethoxyethyl) diaminopurine (PMEDAP), ochratoxin (OTA), acyclovir (ACV), 3'-azido-3-'deoxythymidine (AZT), cimetidine (CMD), 2,4-dichloro-phenoxyacetate (2,4-D), hippurate (HA), indoleacetate (IA), indoxyl sulfate (IS) and 3-carboxy-4-methyl-5-propyl-2-furanpropionate (CMPF) and edaravone sulfate. PAH uptake is inhibited by p-chloromercuribenzenesulphonate (PCMBS), diethyl pyrocarbonate (DEPC), indomethacin, sulindac, diclofenac, carprofen, okadaic acid, benzothiazolylcysteine (BTC), S-chlorotrifluoroethylcysteine (CTFC), cysteine S-conjugates S-dichlorovinylcysteine (DCVC), furosemide, steviol, phorbol 12-myristate 13-acetate (PMA), calcium ionophore A23187, benzylpenicillin, bumetamide, losartan, probenecid, phenol red, urate, glutarate and alpha-ketoglutarate. The polypeptide is Solute carrier family 22 member 6 (slc22a6) (Danio rerio (Zebrafish)).